Here is a 328-residue protein sequence, read N- to C-terminus: Porphobilinogen deaminase (328 aa).

Cys-250 is subject to S-(dipyrrolylmethanemethyl)cysteine.

It belongs to the HMBS family. In terms of assembly, monomer. Dipyrromethane is required as a cofactor.

It catalyses the reaction 4 porphobilinogen + H2O = hydroxymethylbilane + 4 NH4(+). It functions in the pathway porphyrin-containing compound metabolism; protoporphyrin-IX biosynthesis; coproporphyrinogen-III from 5-aminolevulinate: step 2/4. Tetrapolymerization of the monopyrrole PBG into the hydroxymethylbilane pre-uroporphyrinogen in several discrete steps. This Burkholderia ambifaria (strain ATCC BAA-244 / DSM 16087 / CCUG 44356 / LMG 19182 / AMMD) (Burkholderia cepacia (strain AMMD)) protein is Porphobilinogen deaminase.